A 504-amino-acid chain; its full sequence is MSEIVDTELLVNCTILAVRRFELNSIVNTTLLGSLNRTEVVSLLSSIIDNRDNLESINEAKDFLTECLFPSPTRPYELPWEQKTIWAIIFGLMMFVAIAGNGIVLWIVTGHRSMRTVTNYFLLNLSIADLLMSSLNCVFNFIFMLNSDWPFGSIYCTINNFVANVTVSTSVFTLVAISFDRYIAIVHPLKRRTSRRKVRIILVLIWALSCVLSAPCLLYSSIMTKHYYNGKSRTVCFMMWPDGRYPTSMADYAYNLIILVLTYGIPMIVMLICYSLMGRVLWGSRSIGENTDRQMESMKSKRKVVRMFIAIVSIFAICWLPYHLFFIYAYHNNQVASTKYVQHMYLGFYWLAMSNAMVNPLIYYWMNKRFRMYFQRIICCCCVGLTRHRFDSPKSRLTNKNSSNRHTRAETKSQWKRSTMETQIQQAPVTSSCREQRSAQQQQPPGSGTNRAAVECIMERPADGSSSPLCLSINNSIGERQRVKIKYISCDEDNNPVELSPKQM.

Topologically, residues M1–T84 are extracellular. N-linked (GlcNAc...) asparagine glycans are attached at residues N12, N28, and N36. The helical transmembrane segment at I85–V108 threads the bilayer. Residues T109 to T118 lie on the Cytoplasmic side of the membrane. A helical membrane pass occupies residues N119–F143. The Extracellular portion of the chain corresponds to M144 to Y155. A helical transmembrane segment spans residues C156–F179. At D180–R199 the chain is on the cytoplasmic side. The helical transmembrane segment at I200–T224 threads the bilayer. Residues K225–A250 lie on the Extracellular side of the membrane. Residues D251 to S275 traverse the membrane as a helical segment. Residues L276 to F308 are Cytoplasmic-facing. Residues I309–Y330 traverse the membrane as a helical segment. At H331–H343 the chain is on the extracellular side. A helical membrane pass occupies residues M344–N367. Residues K368 to M504 lie on the Cytoplasmic side of the membrane. The interval P393–N450 is disordered. Polar residues-rich tracts occupy residues S395–N404 and K416–N450.

This sequence belongs to the G-protein coupled receptor 1 family. Expressed in central nervous system, as well as in subsets of neurons in each segment of the developing ventral ganglia.

The protein localises to the cell membrane. Receptor for tachykinin-like peptides. This is Tachykinin-like peptides receptor 86C (TkR86C) from Drosophila melanogaster (Fruit fly).